Here is a 94-residue protein sequence, read N- to C-terminus: Integration host factor subunit beta (94 aa).

It belongs to the bacterial histone-like protein family. Heterodimer of an alpha and a beta chain.

Its function is as follows. This protein is one of the two subunits of integration host factor, a specific DNA-binding protein that functions in genetic recombination as well as in transcriptional and translational control. This is Integration host factor subunit beta from Histophilus somni (strain 129Pt) (Haemophilus somnus).